Consider the following 416-residue polypeptide: Phosphoglycerate kinase (416 aa).

(2R)-3-phosphoglycerate contacts are provided by valine 22, aspartate 23, phenylalanine 24, asparagine 25, glutamine 37, arginine 38, serine 61, histidine 62, glycine 64, arginine 65, leucine 120, arginine 121, histidine 168, and arginine 169. Glycine 212 is a binding site for ADP. Position 212 (glycine 212) interacts with CDP. Positions 213 and 214 each coordinate AMP. Position 213 (alanine 213) interacts with ATP. Alanine 213 is a binding site for Mg(2+). Aspartate 217 serves as a coordination point for CDP. Residue aspartate 217 participates in Mg(2+) binding. An AMP-binding site is contributed by lysine 218. Position 218 (lysine 218) interacts with ATP. Glycine 236 is a binding site for ADP. Glycine 236 is a CDP binding site. AMP is bound by residues glycine 237 and glycine 311. Residues glycine 237 and glycine 311 each coordinate ATP. Residues glycine 336 and phenylalanine 341 each contribute to the CDP site. Residue phenylalanine 341 coordinates ADP. Glutamate 342 is a binding site for AMP. ATP is bound by residues glutamate 342, aspartate 373, and threonine 374. Aspartate 373 is a Mg(2+) binding site.

It belongs to the phosphoglycerate kinase family. Monomer. It depends on Mg(2+) as a cofactor. As to expression, expressed in all cells of the worm (at protein level), higher expression in the cells associated with the tubercles (tegumental modifications), the muscle and along the tegument.

The catalysed reaction is (2R)-3-phosphoglycerate + ATP = (2R)-3-phospho-glyceroyl phosphate + ADP. It participates in carbohydrate degradation; glycolysis; pyruvate from D-glyceraldehyde 3-phosphate: step 2/5. Functionally, involved in the seventh step in glycolysis. Catalyzes the conversion of 1,3-bisphosphoglycerate ((2R)-3-phospho-glyceroyl phosphate) to 3-phosphoglycerate ((2R)-3-phosphoglycerate) and results in the formation of ATP. Associated with the tegument to provide the energy needed for the tegumental repair resulting from immune damage. This chain is Phosphoglycerate kinase (PGK), found in Schistosoma mansoni (Blood fluke).